A 193-amino-acid chain; its full sequence is MNFLAHLHLAALADSSLLGNLLADFVRGNPQGEYPPEIVAGIMMHRRVDVMTDTLPLVKEARTYFSADYRRVSPITLDVLWDHFLARHWDQLVPNCTLPDFLQHAQSQILPHLPHTPARFQSLNAYLWSERWLERYAELPFIADVLQGMANRRPKLAALAGSFYAIEQHYQPLEDLFLTFYPTMMRQAQHKQI.

It belongs to the AcpH family.

The enzyme catalyses holo-[ACP] + H2O = apo-[ACP] + (R)-4'-phosphopantetheine + H(+). Converts holo-ACP to apo-ACP by hydrolytic cleavage of the phosphopantetheine prosthetic group from ACP. This chain is Acyl carrier protein phosphodiesterase, found in Yersinia pestis.